Here is a 308-residue protein sequence, read N- to C-terminus: Ribosomal RNA small subunit methyltransferase H (308 aa).

S-adenosyl-L-methionine is bound by residues 34–36, Asp54, Phe85, Asp99, and Gln106; that span reads GGH.

This sequence belongs to the methyltransferase superfamily. RsmH family.

It is found in the cytoplasm. The enzyme catalyses cytidine(1402) in 16S rRNA + S-adenosyl-L-methionine = N(4)-methylcytidine(1402) in 16S rRNA + S-adenosyl-L-homocysteine + H(+). Functionally, specifically methylates the N4 position of cytidine in position 1402 (C1402) of 16S rRNA. This Dichelobacter nodosus (strain VCS1703A) protein is Ribosomal RNA small subunit methyltransferase H.